The sequence spans 1068 residues: Phosphatidylinositol 4,5-bisphosphate 3-kinase catalytic subunit alpha isoform (1068 aa).

Positions 16–105 (MPPRILVECL…QPFLKVIEPV (90 aa)) constitute a PI3K-ABD domain. One can recognise a PI3K-RBD domain in the interval 187–289 (KGQIIVVIWV…GRMPNLMLMA (103 aa)). Positions 330 to 487 (INSALRIKIL…DWFSSVVKFP (158 aa)) constitute a C2 PI3K-type domain. The PIK helical domain occupies 517–694 (LARDNELREN…GLLLESYCRA (178 aa)). Residues 765–1051 (RLEECRIMSS…QMNDAHHGGW (287 aa)) enclose the PI3K/PI4K catalytic domain. The interval 771 to 777 (IMSSAKR) is G-loop. The tract at residues 912–920 (GIGDRHNSN) is catalytic loop. An activation loop region spans residues 931 to 957 (HIDFGHFLDHKKKKFGYKRERVPFVLT).

It belongs to the PI3/PI4-kinase family. As to quaternary structure, heterodimer of a catalytic subunit PIK3CA and a p85 regulatory subunit (PIK3R1, PIK3R2 or PIK3R3). Interacts with IRS1 in nuclear extracts. Interacts with RUFY3. Interacts with RASD2. Interacts with APPL1. Interacts with HRAS and KRAS. Interaction with HRAS/KRAS is required for PI3K pathway signaling and cell proliferation stimulated by EGF and FGF2. Interacts with FAM83B; activates the PI3K/AKT signaling cascade.

The enzyme catalyses a 1,2-diacyl-sn-glycero-3-phospho-(1D-myo-inositol-4,5-bisphosphate) + ATP = a 1,2-diacyl-sn-glycero-3-phospho-(1D-myo-inositol-3,4,5-trisphosphate) + ADP + H(+). It carries out the reaction a 1,2-diacyl-sn-glycero-3-phospho-(1D-myo-inositol) + ATP = a 1,2-diacyl-sn-glycero-3-phospho-(1D-myo-inositol-3-phosphate) + ADP + H(+). It catalyses the reaction L-seryl-[protein] + ATP = O-phospho-L-seryl-[protein] + ADP + H(+). The catalysed reaction is 1,2-dioctanoyl-sn-glycero-3-phospho-(1D-myo-inositol-4,5-bisphosphate) + ATP = 1,2-dioctanoyl-sn-glycero-3-phospho-(1D-myo-inositol-3,4,5-trisphosphate) + ADP + H(+). The enzyme catalyses 1-octadecanoyl-2-(5Z,8Z,11Z,14Z)-eicosatetraenoyl-sn-glycero-3-phospho-1D-myo-inositol 4,5-bisphosphate + ATP = 1-octadecanoyl-2-(5Z,8Z,11Z,14Z-eicosatetraenoyl)-sn-glycero-3-phospho-(1D-myo-inositol 3,4,5-triphosphate) + ADP + H(+). Its pathway is phospholipid metabolism; phosphatidylinositol phosphate biosynthesis. Its function is as follows. Phosphoinositide-3-kinase (PI3K) phosphorylates phosphatidylinositol (PI) and its phosphorylated derivatives at position 3 of the inositol ring to produce 3-phosphoinositides. Uses ATP and PtdIns(4,5)P2 (phosphatidylinositol 4,5-bisphosphate) to generate phosphatidylinositol 3,4,5-trisphosphate (PIP3). PIP3 plays a key role by recruiting PH domain-containing proteins to the membrane, including AKT1 and PDPK1, activating signaling cascades involved in cell growth, survival, proliferation, motility and morphology. Participates in cellular signaling in response to various growth factors. Involved in the activation of AKT1 upon stimulation by receptor tyrosine kinases ligands such as EGF, insulin, IGF1, VEGFA and PDGF. Involved in signaling via insulin-receptor substrate (IRS) proteins. Essential in endothelial cell migration during vascular development through VEGFA signaling, possibly by regulating RhoA activity. Required for lymphatic vasculature development, possibly by binding to RAS and by activation by EGF and FGF2, but not by PDGF. Regulates invadopodia formation through the PDPK1-AKT1 pathway. Participates in cardiomyogenesis in embryonic stem cells through a AKT1 pathway. Participates in vasculogenesis in embryonic stem cells through PDK1 and protein kinase C pathway. In addition to its lipid kinase activity, it displays a serine-protein kinase activity that results in the autophosphorylation of the p85alpha regulatory subunit as well as phosphorylation of other proteins such as 4EBP1, H-Ras, the IL-3 beta c receptor and possibly others. Plays a role in the positive regulation of phagocytosis and pinocytosis. The sequence is that of Phosphatidylinositol 4,5-bisphosphate 3-kinase catalytic subunit alpha isoform (PIK3CA) from Homo sapiens (Human).